The sequence spans 521 residues: Ribonuclease Y (521 aa).

A helical membrane pass occupies residues 3–23; the sequence is VSIWMLVITVLAAVAAYFAGS. In terms of domain architecture, KH spans 211–271; it reads TVSVVPLPSD…VRREVARMSL (61 aa). The 94-residue stretch at 337-430 folds into the HD domain; sequence IYQHSLEVAF…VQAADALSGA (94 aa).

It belongs to the RNase Y family.

It localises to the cell membrane. Functionally, endoribonuclease that initiates mRNA decay. The chain is Ribonuclease Y from Pelobacter propionicus (strain DSM 2379 / NBRC 103807 / OttBd1).